Consider the following 557-residue polypeptide: Protein NRT1/ PTR FAMILY 5.14 (557 aa).

Helical transmembrane passes span 35 to 55 (AALFIIGVEVAERFAYYGIGS) and 78 to 98 (AWSGIATLLPVLGAFVADAFL). A Phosphothreonine modification is found at Thr-103. 10 consecutive transmembrane segments (helical) span residues 104–124 (IIISSLIYVLGLAFLTLSAFL), 133–153 (SSTSSFLNVLFFFSLYLVAIG), 183–203 (FFNWWYLSLSAGICFAILVVV), 209–229 (FSWAFGFGIPCVFMVISLVLF), 320–340 (IPVWFTTLAYAIPYAQYMTFF), 357–377 (IPPASLQVFIGISIVLFVPIY), 401–421 (IGTGIVLSTITMVIAALVEFK), 443–463 (IWWLIPQYLLLGLADVYTLVG), 479–499 (IGLALYLSALGVGSLLSSLLI), and 526–546 (YFYWLLAIVSAVGFFTFLFIS).

It belongs to the major facilitator superfamily. Proton-dependent oligopeptide transporter (POT/PTR) (TC 2.A.17) family. Expressed in roots.

Its subcellular location is the membrane. This Arabidopsis thaliana (Mouse-ear cress) protein is Protein NRT1/ PTR FAMILY 5.14 (NPF5.14).